Here is a 431-residue protein sequence, read N- to C-terminus: Keratin, type I cytoskeletal 18 (431 aa).

The interval 2–83 (SLRTSYSVRS…SGSTGEIMGN (82 aa)) is head. Ser12 bears the Phosphoserine mark. Thr13 bears the Phosphothreonine mark. Ser22 and Ser36 each carry phosphoserine. The interval 84-119 (EKMAMQNLNDRLASYLEKVRILEQANSKLELKIREA) is coil 1A. The IF rod domain occupies 84–395 (EKMAMQNLND…RLLDGGDFKL (312 aa)). Residues 120–136 (LEKRGPDVHDYSRFQPI) form a linker 1 region. Residues 137 to 228 (VDELRKKIFD…KNHDNEVMEL (92 aa)) are coil 1B. The interval 229–252 (RNQISQSGVQVDVDAPKGQDLSQI) is linker 12. The interval 253–390 (MEEIRAKYEK…IATYRRLLDG (138 aa)) is coil 2. Residues 391–431 (GDFKLQDALEEQKKVKVMTVTQTLVDGKVVSSSTETKERKL) form a tail region.

It belongs to the intermediate filament family. Heterotetramer of two type I and two type II keratins. Keratin-18 associates with keratin-8. In terms of processing, proteolytically cleaved by caspases during epithelial cell apoptosis. Expressed in simple epithelia such as intestinal mucosa, bile duct, hepatocytes, renal tubules, endothelia, ocular lens epithelium, and in a variety of mesenchymally-derived cells such as blood vessel endothelia, pillar gill cells, optic nerve glial cells, fibroblasts, interstitial cells, chondrocytes and ovarian theca cells. Also expressed in epidermis, pharyngeal mucosa, mucosa of anterior esophagus, gill mucosa and cornea.

Functionally, when phosphorylated, plays a role in filament reorganization. The chain is Keratin, type I cytoskeletal 18 from Danio rerio (Zebrafish).